Here is a 633-residue protein sequence, read N- to C-terminus: Extracellular metalloproteinase 5 (633 aa).

The signal sequence occupies residues 1–21 (MHGLLLAAAGLLSLPLHVVAH). A propeptide spanning residues 22-245 (PQPSTSLAGR…HNVVDYVSHA (224 aa)) is cleaved from the precursor. A glycan (N-linked (GlcNAc...) asparagine) is linked at Asn285. His428 is a binding site for Zn(2+). Glu429 is an active-site residue. His432 is a binding site for Zn(2+). N-linked (GlcNAc...) asparagine glycans are attached at residues Asn592 and Asn621.

Belongs to the peptidase M36 family. It depends on Zn(2+) as a cofactor.

It localises to the secreted. In terms of biological role, secreted metalloproteinase probably acting as a virulence factor. The protein is Extracellular metalloproteinase 5 (MEP5) of Trichophyton rubrum (Athlete's foot fungus).